Here is a 399-residue protein sequence, read N- to C-terminus: Arginase (399 aa).

Mn(2+) is bound by residues His-193, Asp-216, His-218, and Asp-220. Substrate contacts are provided by residues 218–222 (HADIN), 229–231 (SGN), and Asp-273. Positions 322 and 324 each coordinate Mn(2+). 2 residues coordinate substrate: Thr-336 and Glu-367.

Belongs to the arginase family. Requires Mn(2+) as cofactor.

The protein localises to the cytoplasm. The catalysed reaction is L-arginine + H2O = urea + L-ornithine. Its pathway is nitrogen metabolism; urea cycle; L-ornithine and urea from L-arginine: step 1/1. The chain is Arginase (CAR1) from Eremothecium gossypii (strain ATCC 10895 / CBS 109.51 / FGSC 9923 / NRRL Y-1056) (Yeast).